Reading from the N-terminus, the 67-residue chain is Metallothionein-B (67 aa).

Belongs to the metallothionein superfamily. Type 4 family.

Functionally, metallothioneins have a high content of cysteine residues that bind various heavy metals. The sequence is that of Metallothionein-B from Sphaerechinus granularis (Purple sea urchin).